The chain runs to 75 residues: Pi-hexatoxin-Hi1d (75 aa).

6 disulfides stabilise this stretch: cysteine 3–cysteine 18, cysteine 10–cysteine 23, cysteine 17–cysteine 33, cysteine 40–cysteine 55, cysteine 47–cysteine 60, and cysteine 54–cysteine 71. Domain repeat units follow at residues cysteine 3–cysteine 33 and cysteine 40–cysteine 71. Residues cysteine 3–cysteine 71 form a 2 X approximate repeats with cysteine pattern C-C-CC-C-C region.

The protein belongs to the psalmotoxin-1 family. Double-knot toxin subfamily. Expressed by the venom gland.

It localises to the secreted. In terms of biological role, this toxin potently and selectively inhibits ASIC1a, an isoform of the gene ASIC1. It incompletely inhibits ASIC1a activation in a pH-independent and slowly reversible manner. This toxin acts by binding to and stabilizing the closed state of the channel, thereby impeding the transition into a conducting state. This toxin may bind to the acidic pocket of ASIC1a, since mutation of a key residue of this pocket (Arg-350) abolishes the ability of the toxin to inhibit ASIC1a. In vivo, this toxin protects the brain from neuronal injury when administered up to 8 hours after stroke onset. In Hadronyche infensa (Fraser island funnel-web spider), this protein is Pi-hexatoxin-Hi1d.